A 422-amino-acid chain; its full sequence is Adenylosuccinate synthetase (422 aa).

GTP is bound by residues 11–17 (GDEGKGK) and 39–41 (GHT). The active-site Proton acceptor is Asp-12. Residues Asp-12 and Gly-39 each coordinate Mg(2+). Residues 12 to 15 (DEGK), 37 to 40 (NAGH), Thr-129, Arg-143, Asn-219, Thr-234, and Arg-298 contribute to the IMP site. The Proton donor role is filled by His-40. Position 294–300 (294–300 (VTTGRRR)) interacts with substrate. Residues Arg-300, 326 to 328 (KLD), and 409 to 411 (GTG) each bind GTP.

The protein belongs to the adenylosuccinate synthetase family. In terms of assembly, homodimer. It depends on Mg(2+) as a cofactor.

The protein resides in the cytoplasm. It carries out the reaction IMP + L-aspartate + GTP = N(6)-(1,2-dicarboxyethyl)-AMP + GDP + phosphate + 2 H(+). The protein operates within purine metabolism; AMP biosynthesis via de novo pathway; AMP from IMP: step 1/2. In terms of biological role, plays an important role in the de novo pathway and in the salvage pathway of purine nucleotide biosynthesis. Catalyzes the first committed step in the biosynthesis of AMP from IMP. The polypeptide is Adenylosuccinate synthetase (Ajellomyces capsulatus (strain NAm1 / WU24) (Darling's disease fungus)).